The primary structure comprises 216 residues: Imidazole glycerol phosphate synthase subunit HisH (216 aa).

The 215-residue stretch at 2-216 (SIAIIDYGSG…LISNFLRWKP (215 aa)) folds into the Glutamine amidotransferase type-1 domain. The Nucleophile role is filled by C88. Residues H196 and E198 contribute to the active site.

Heterodimer of HisH and HisF.

The protein resides in the cytoplasm. It catalyses the reaction 5-[(5-phospho-1-deoxy-D-ribulos-1-ylimino)methylamino]-1-(5-phospho-beta-D-ribosyl)imidazole-4-carboxamide + L-glutamine = D-erythro-1-(imidazol-4-yl)glycerol 3-phosphate + 5-amino-1-(5-phospho-beta-D-ribosyl)imidazole-4-carboxamide + L-glutamate + H(+). The enzyme catalyses L-glutamine + H2O = L-glutamate + NH4(+). The protein operates within amino-acid biosynthesis; L-histidine biosynthesis; L-histidine from 5-phospho-alpha-D-ribose 1-diphosphate: step 5/9. Its function is as follows. IGPS catalyzes the conversion of PRFAR and glutamine to IGP, AICAR and glutamate. The HisH subunit catalyzes the hydrolysis of glutamine to glutamate and ammonia as part of the synthesis of IGP and AICAR. The resulting ammonia molecule is channeled to the active site of HisF. This is Imidazole glycerol phosphate synthase subunit HisH from Bradyrhizobium diazoefficiens (strain JCM 10833 / BCRC 13528 / IAM 13628 / NBRC 14792 / USDA 110).